We begin with the raw amino-acid sequence, 61 residues long: Photosystem II reaction center protein K (61 aa).

Positions 1–24 (MPNILSLTCICFNSVIYPTSFFFA) are excised as a propeptide. A helical membrane pass occupies residues 32 to 52 (IFNPIVDFMPVIPLFFFLLAF).

This sequence belongs to the PsbK family. As to quaternary structure, PSII is composed of 1 copy each of membrane proteins PsbA, PsbB, PsbC, PsbD, PsbE, PsbF, PsbH, PsbI, PsbJ, PsbK, PsbL, PsbM, PsbT, PsbX, PsbY, PsbZ, Psb30/Ycf12, at least 3 peripheral proteins of the oxygen-evolving complex and a large number of cofactors. It forms dimeric complexes.

It is found in the plastid. The protein resides in the chloroplast thylakoid membrane. Its function is as follows. One of the components of the core complex of photosystem II (PSII). PSII is a light-driven water:plastoquinone oxidoreductase that uses light energy to abstract electrons from H(2)O, generating O(2) and a proton gradient subsequently used for ATP formation. It consists of a core antenna complex that captures photons, and an electron transfer chain that converts photonic excitation into a charge separation. In Triticum aestivum (Wheat), this protein is Photosystem II reaction center protein K.